Consider the following 366-residue polypeptide: tRNA-specific 2-thiouridylase MnmA (366 aa).

ATP-binding positions include 6 to 13 (GLSGGVDS) and Met32. Cys96 (nucleophile) is an active-site residue. Cys96 and Cys196 are oxidised to a cystine. Position 120 (Gly120) interacts with ATP. Positions 146-148 (KDQ) are interaction with tRNA. Cys196 serves as the catalytic Cysteine persulfide intermediate. Residues 302-303 (RY) are interaction with tRNA.

Belongs to the MnmA/TRMU family.

It localises to the cytoplasm. It catalyses the reaction S-sulfanyl-L-cysteinyl-[protein] + uridine(34) in tRNA + AH2 + ATP = 2-thiouridine(34) in tRNA + L-cysteinyl-[protein] + A + AMP + diphosphate + H(+). Its function is as follows. Catalyzes the 2-thiolation of uridine at the wobble position (U34) of tRNA, leading to the formation of s(2)U34. The chain is tRNA-specific 2-thiouridylase MnmA from Treponema denticola (strain ATCC 35405 / DSM 14222 / CIP 103919 / JCM 8153 / KCTC 15104).